Reading from the N-terminus, the 406-residue chain is Sorting nexin-6 (406 aa).

N-acetylmethionine is present on methionine 1. Methionine 2 carries the N-acetylmethionine; in Sorting nexin-6, N-terminally processed modification. An interaction with PIM1 region spans residues 2 to 179 (MEGLDDGPDF…NQDLSVRGKN (178 aa)). One can recognise a PX domain in the interval 26 to 173 (LQSDAALQVD…HVFLEYNQDL (148 aa)). A 1,2-diacyl-sn-glycero-3-phospho-(1D-myo-inositol-4,5-bisphosphate) contacts are provided by residues 41–47 (SERDKVK), 100–106 (FDASREK), and 114–117 (EGSM). Residues serine 116 and serine 194 each carry the phosphoserine modification. The segment at 182–199 (EKLEDFFKNMVKSADGVI) is membrane-binding amphipathic helix. The BAR domain occupies 203–406 (VKDVDDFFEH…NCLAVLNGDT (204 aa)).

This sequence belongs to the sorting nexin family. As to quaternary structure, forms heterodimers with BAR domain-containing sorting nexins SNX1 and SNX2. The heterodimers are proposed to self-assemble into helical arrays on the membrane to stabilize and expand local membrane curvature underlying endosomal tubule formation. Thought to be a component of the originally described retromer complex (also called SNX-BAR retromer) which is a pentamer containing the heterotrimeric retromer cargo-selective complex (CSC), also described as vacuolar protein sorting subcomplex (VPS), and a heterodimeric membrane-deforming subcomplex formed between SNX1 or SNX2 and SNX5 or SNX6 (also called SNX-BAR subcomplex); the respective CSC and SNX-BAR subcomplexes associate with low affinity. Interacts with SNX1, SNX2, VPS26A, VPS29, VPS35, TGFB receptors, BACE1, BRMS1, PIP5K1C. Interacts with DCTN1; the association with DCTN1 is involved in movement of retromer-c ontaining vesicles toward the TGN. Interacts with PIM1; translocating SNX6 to the nucleus. Interacts with CDKN1B and GIT1. In terms of processing, in vitro phosphorylated by PIM1; not affecting PIM1-dependent nuclear translocation.

The protein resides in the early endosome membrane. It localises to the cytoplasmic vesicle. The protein localises to the cytoplasm. Its subcellular location is the nucleus. Functionally, involved in several stages of intracellular trafficking. Interacts with membranes phosphatidylinositol 3,4-bisphosphate and/or phosphatidylinositol 4,5-bisphosphate. Acts in part as component of the retromer membrane-deforming SNX-BAR subcomplex. The SNX-BAR retromer mediates retrograde transport of cargo proteins from endosomes to the trans-Golgi network (TGN) and is involved in endosome-to-plasma membrane transport for cargo protein recycling. The SNX-BAR subcomplex functions to deform the donor membrane into a tubular profile called endosome-to-TGN transport carrier (ETC). Does not have in vitro vesicle-to-membrane remodeling activity. Involved in retrograde endosome-to-TGN transport of lysosomal enzyme receptor IGF2R. May function as link between transport vesicles and dynactin. Negatively regulates retrograde transport of BACE1 from the cell surface to the trans-Golgi network. Involved in E-cadherin sorting and degradation; inhibits PIP5K1C-mediated E-cadherin degradation. In association with GIT1 involved in EGFR degradation. Promotes lysosomal degradation of CDKN1B. May contribute to transcription regulation. The protein is Sorting nexin-6 (SNX6) of Pongo abelii (Sumatran orangutan).